The sequence spans 233 residues: Large ribosomal subunit protein uL1 (233 aa).

It belongs to the universal ribosomal protein uL1 family. As to quaternary structure, part of the 50S ribosomal subunit.

Binds directly to 23S rRNA. The L1 stalk is quite mobile in the ribosome, and is involved in E site tRNA release. In terms of biological role, protein L1 is also a translational repressor protein, it controls the translation of the L11 operon by binding to its mRNA. The polypeptide is Large ribosomal subunit protein uL1 (Brucella melitensis biotype 1 (strain ATCC 23456 / CCUG 17765 / NCTC 10094 / 16M)).